The sequence spans 288 residues: Protein sprouty homolog 3 (288 aa).

The region spanning 154-260 is the SPR domain; sequence KCVPCTAARP…GYDSLRRPGC (107 aa).

Belongs to the sprouty family. In terms of assembly, interacts with TESK1. Interacts with USP11. Interacts with CAV1 (via C-terminus). Widely expressed; particularly in the fetal tissues. Expressed in the brain with expression the highest in Purkinje cells in the cerebellum (at protein level). Expressed in the myocardium of the heart.

It is found in the cytoplasm. In terms of biological role, inhibits neurite branching, arbor length and neurite complexity. Inhibits EGF-mediated p42/44 ERK signaling. Negatively regulates the MAPK cascade, resulting in a reduction of extracellular matrix protein accumulation. May function as an antagonist of fibroblast growth factor (FGF) pathways and may negatively modulate respiratory organogenesis. This Homo sapiens (Human) protein is Protein sprouty homolog 3.